The following is a 437-amino-acid chain: Enolase (437 aa).

Gln162 is a (2R)-2-phosphoglycerate binding site. Glu204 serves as the catalytic Proton donor. Mg(2+) contacts are provided by Asp251, Glu297, and Asp324. 4 residues coordinate (2R)-2-phosphoglycerate: Lys349, Arg378, Ser379, and Lys400. Lys349 acts as the Proton acceptor in catalysis.

This sequence belongs to the enolase family. Requires Mg(2+) as cofactor.

Its subcellular location is the cytoplasm. The protein localises to the secreted. It is found in the cell surface. The catalysed reaction is (2R)-2-phosphoglycerate = phosphoenolpyruvate + H2O. Its pathway is carbohydrate degradation; glycolysis; pyruvate from D-glyceraldehyde 3-phosphate: step 4/5. Functionally, catalyzes the reversible conversion of 2-phosphoglycerate (2-PG) into phosphoenolpyruvate (PEP). It is essential for the degradation of carbohydrates via glycolysis. The protein is Enolase of Chlorobaculum parvum (strain DSM 263 / NCIMB 8327) (Chlorobium vibrioforme subsp. thiosulfatophilum).